Here is a 149-residue protein sequence, read N- to C-terminus: Arginine repressor (149 aa).

This sequence belongs to the ArgR family.

It is found in the cytoplasm. It participates in amino-acid biosynthesis; L-arginine biosynthesis [regulation]. In terms of biological role, regulates arginine biosynthesis genes. The protein is Arginine repressor of Listeria welshimeri serovar 6b (strain ATCC 35897 / DSM 20650 / CCUG 15529 / CIP 8149 / NCTC 11857 / SLCC 5334 / V8).